The chain runs to 360 residues: Aminomethyltransferase (360 aa).

It belongs to the GcvT family. In terms of assembly, the glycine cleavage system is composed of four proteins: P, T, L and H.

It catalyses the reaction N(6)-[(R)-S(8)-aminomethyldihydrolipoyl]-L-lysyl-[protein] + (6S)-5,6,7,8-tetrahydrofolate = N(6)-[(R)-dihydrolipoyl]-L-lysyl-[protein] + (6R)-5,10-methylene-5,6,7,8-tetrahydrofolate + NH4(+). Functionally, the glycine cleavage system catalyzes the degradation of glycine. The chain is Aminomethyltransferase from Pseudoalteromonas translucida (strain TAC 125).